The primary structure comprises 147 residues: Large ribosomal subunit protein uL13 (147 aa).

The disordered stretch occupies residues 127–147; it reads GPEHPHSAQQPKVLEIQGAAR.

Belongs to the universal ribosomal protein uL13 family. Part of the 50S ribosomal subunit.

This protein is one of the early assembly proteins of the 50S ribosomal subunit, although it is not seen to bind rRNA by itself. It is important during the early stages of 50S assembly. The chain is Large ribosomal subunit protein uL13 from Verminephrobacter eiseniae (strain EF01-2).